The primary structure comprises 197 residues: Probable chorismate pyruvate-lyase (197 aa).

The substrate site is built by R66, L104, and E169.

Belongs to the UbiC family.

It localises to the cytoplasm. The catalysed reaction is chorismate = 4-hydroxybenzoate + pyruvate. The protein operates within cofactor biosynthesis; ubiquinone biosynthesis. Removes the pyruvyl group from chorismate, with concomitant aromatization of the ring, to provide 4-hydroxybenzoate (4HB) for the ubiquinone pathway. In Albidiferax ferrireducens (strain ATCC BAA-621 / DSM 15236 / T118) (Rhodoferax ferrireducens), this protein is Probable chorismate pyruvate-lyase.